We begin with the raw amino-acid sequence, 600 residues long: 69 kDa paraflagellar rod protein (600 aa).

The tract at residues 335-355 is calmodulin-binding; the sequence is DKQDEAWRRIQELERVLQRLG.

Heterodimer of a 69 kDa and a 73 kDa protein.

The protein resides in the cell projection. It localises to the cilium. Its subcellular location is the flagellum. It is found in the cytoplasm. The protein localises to the cytoskeleton. Major component of the paraflagellar rod (PFR). The PFR is a highly ordered lattices of fibrous proteins that are located inside the flagellum and assume a fixed orientation with respect to the microtubular axoneme. This chain is 69 kDa paraflagellar rod protein (PFRA), found in Trypanosoma brucei brucei.